The sequence spans 317 residues: Transaldolase (317 aa).

Catalysis depends on lysine 132, which acts as the Schiff-base intermediate with substrate.

Belongs to the transaldolase family. Type 1 subfamily. In terms of assembly, homodimer.

Its subcellular location is the cytoplasm. The catalysed reaction is D-sedoheptulose 7-phosphate + D-glyceraldehyde 3-phosphate = D-erythrose 4-phosphate + beta-D-fructose 6-phosphate. Its pathway is carbohydrate degradation; pentose phosphate pathway; D-glyceraldehyde 3-phosphate and beta-D-fructose 6-phosphate from D-ribose 5-phosphate and D-xylulose 5-phosphate (non-oxidative stage): step 2/3. Functionally, transaldolase is important for the balance of metabolites in the pentose-phosphate pathway. In Yersinia pseudotuberculosis serotype O:1b (strain IP 31758), this protein is Transaldolase.